Reading from the N-terminus, the 544-residue chain is Membrane protein insertase YidC (544 aa).

The helical transmembrane segment at 4-24 threads the bilayer; that stretch reads KALLALVLSAAVLLIYQIFIY. A disordered region spans residues 44–78; it reads NPAAPVSPQTPADEPSSGSAANPETAAALPVDGTE. 3 helical membrane-spanning segments follow: residues 363 to 383, 434 to 454, and 508 to 528; these read NYGIAIIILTILIKILFWPLG, LPMIIQIPVFFGLYKALLYAI, and PVIFTFMFLNFPSGLVIYWLF.

The protein belongs to the OXA1/ALB3/YidC family. Type 1 subfamily. In terms of assembly, interacts with the Sec translocase complex via SecD. Specifically interacts with transmembrane segments of nascent integral membrane proteins during membrane integration.

The protein resides in the cell inner membrane. In terms of biological role, required for the insertion and/or proper folding and/or complex formation of integral membrane proteins into the membrane. Involved in integration of membrane proteins that insert both dependently and independently of the Sec translocase complex, as well as at least some lipoproteins. Aids folding of multispanning membrane proteins. The protein is Membrane protein insertase YidC of Syntrophus aciditrophicus (strain SB).